The chain runs to 159 residues: Fimbrial protein MyfA (159 aa).

A signal peptide spans 1–29 (MNMKKFVKKPLAIAVLMLASGGMVNMVHA).

Forms a homomer composed of subunits assembled in a large structure resistant to proteases and chaotropic agents.

The protein localises to the fimbrium. In terms of biological role, major pilus subunit. Expressed only in pathogenic serotypes, it is part of myf, a probable virulence factor. In Yersinia enterocolitica, this protein is Fimbrial protein MyfA (myfA).